The chain runs to 564 residues: Potassium-transporting ATPase potassium-binding subunit (564 aa).

10 helical membrane-spanning segments follow: residues 4–24, 67–87, 135–155, 179–199, 258–278, 286–306, 382–402, 420–440, 487–507, and 528–548; these read YDYW…PFLG, TLAL…ILLF, VGLT…LVAL, LYGL…QGVP, FEVA…GHYV, AIIG…LWAE, AGLY…GLMI, LLVV…AIAA, LMLG…VLAL, and GPLF…LTFL.

It belongs to the KdpA family. In terms of assembly, the system is composed of three essential subunits: KdpA, KdpB and KdpC.

The protein localises to the cell inner membrane. Functionally, part of the high-affinity ATP-driven potassium transport (or Kdp) system, which catalyzes the hydrolysis of ATP coupled with the electrogenic transport of potassium into the cytoplasm. This subunit binds the periplasmic potassium ions and delivers the ions to the membrane domain of KdpB through an intramembrane tunnel. This is Potassium-transporting ATPase potassium-binding subunit from Pseudomonas fluorescens (strain Pf0-1).